Here is a 308-residue protein sequence, read N- to C-terminus: Bifunctional protein FolD (308 aa).

NADP(+)-binding positions include 171-173, serine 198, and isoleucine 239; that span reads GRS.

This sequence belongs to the tetrahydrofolate dehydrogenase/cyclohydrolase family. As to quaternary structure, homodimer.

The catalysed reaction is (6R)-5,10-methylene-5,6,7,8-tetrahydrofolate + NADP(+) = (6R)-5,10-methenyltetrahydrofolate + NADPH. It carries out the reaction (6R)-5,10-methenyltetrahydrofolate + H2O = (6R)-10-formyltetrahydrofolate + H(+). The protein operates within one-carbon metabolism; tetrahydrofolate interconversion. Functionally, catalyzes the oxidation of 5,10-methylenetetrahydrofolate to 5,10-methenyltetrahydrofolate and then the hydrolysis of 5,10-methenyltetrahydrofolate to 10-formyltetrahydrofolate. The protein is Bifunctional protein FolD of Borreliella burgdorferi (strain ATCC 35210 / DSM 4680 / CIP 102532 / B31) (Borrelia burgdorferi).